The following is a 126-amino-acid chain: Copper resistance protein C (126 aa).

An N-terminal signal peptide occupies residues 1–23 (MSILNKAILTGGLVMGVAFSAMA). Histidine 24 provides a ligand contact to Cu(2+). 5 residues coordinate Cu(+): methionine 63, methionine 66, methionine 69, histidine 72, and methionine 75. Residue histidine 115 participates in Cu(2+) binding.

This sequence belongs to the CopC family. Monomer-dimer equilibrium in solution for the apo protein. Dimerization is significantly enhanced upon binding of copper(I).

Its subcellular location is the periplasm. In terms of biological role, copper-binding protein involved in copper resistance. This chain is Copper resistance protein C, found in Escherichia coli.